The chain runs to 260 residues: Proteasome subunit alpha (260 aa).

Belongs to the peptidase T1A family. As to quaternary structure, the 20S proteasome core is composed of 14 alpha and 14 beta subunits that assemble into four stacked heptameric rings, resulting in a barrel-shaped structure. The two inner rings, each composed of seven catalytic beta subunits, are sandwiched by two outer rings, each composed of seven alpha subunits. The catalytic chamber with the active sites is on the inside of the barrel. Has a gated structure, the ends of the cylinder being occluded by the N-termini of the alpha-subunits. Is capped at one or both ends by the proteasome regulatory ATPase, PAN.

Its subcellular location is the cytoplasm. The formation of the proteasomal ATPase PAN-20S proteasome complex, via the docking of the C-termini of PAN into the intersubunit pockets in the alpha-rings, triggers opening of the gate for substrate entry. Interconversion between the open-gate and close-gate conformations leads to a dynamic regulation of the 20S proteasome proteolysis activity. Component of the proteasome core, a large protease complex with broad specificity involved in protein degradation. This chain is Proteasome subunit alpha, found in Thermococcus sp. (strain JCM 11816 / KS-1).